The following is a 302-amino-acid chain: Sulfate adenylyltransferase subunit 2 (302 aa).

Belongs to the PAPS reductase family. CysD subfamily. In terms of assembly, heterodimer composed of CysD, the smaller subunit, and CysN.

The enzyme catalyses sulfate + ATP + H(+) = adenosine 5'-phosphosulfate + diphosphate. It participates in sulfur metabolism; hydrogen sulfide biosynthesis; sulfite from sulfate: step 1/3. With CysN forms the ATP sulfurylase (ATPS) that catalyzes the adenylation of sulfate producing adenosine 5'-phosphosulfate (APS) and diphosphate, the first enzymatic step in sulfur assimilation pathway. APS synthesis involves the formation of a high-energy phosphoric-sulfuric acid anhydride bond driven by GTP hydrolysis by CysN coupled to ATP hydrolysis by CysD. This chain is Sulfate adenylyltransferase subunit 2, found in Escherichia coli O81 (strain ED1a).